The sequence spans 458 residues: Transcription factor bHLH10 (458 aa).

The tract at residues 1–49 is disordered; that stretch reads MEEERESLYEEMGCFDPNTPAEVTVESSFSQAEPPPPPPQVLVAGSTSN. The bHLH domain occupies 243-292; that stretch reads SRKSRTSPTERERRVHFNDRFFDLKNLIPNPTKIDRASIVGEAIDYIKEL. Residues 315 to 338 are disordered; it reads KRARVGEGGGGEDQEEEEDTVNYK. The segment covering 324-334 has biased composition (acidic residues); sequence GGEDQEEEEDT.

In terms of assembly, homodimer.

Its subcellular location is the nucleus. The polypeptide is Transcription factor bHLH10 (BHLH10) (Arabidopsis thaliana (Mouse-ear cress)).